Consider the following 452-residue polypeptide: Pup--protein ligase (452 aa).

Glu9 lines the Mg(2+) pocket. Residue Arg53 participates in ATP binding. Tyr55 serves as a coordination point for Mg(2+). The active-site Proton acceptor is the Asp57. Mg(2+) is bound at residue Glu63. Residues Thr66 and Trp419 each coordinate ATP.

This sequence belongs to the Pup ligase/Pup deamidase family. Pup-conjugating enzyme subfamily.

The enzyme catalyses ATP + [prokaryotic ubiquitin-like protein]-L-glutamate + [protein]-L-lysine = ADP + phosphate + N(6)-([prokaryotic ubiquitin-like protein]-gamma-L-glutamyl)-[protein]-L-lysine.. It functions in the pathway protein degradation; proteasomal Pup-dependent pathway. The protein operates within protein modification; protein pupylation. Functionally, catalyzes the covalent attachment of the prokaryotic ubiquitin-like protein modifier Pup to the proteasomal substrate proteins, thereby targeting them for proteasomal degradation. This tagging system is termed pupylation. The ligation reaction involves the side-chain carboxylate of the C-terminal glutamate of Pup and the side-chain amino group of a substrate lysine. This chain is Pup--protein ligase, found in Mycobacterium tuberculosis (strain KZN 1435 / MDR).